The following is a 150-amino-acid chain: MADPEVAAAGIVKKRTFKKFSFRGVDLDALLDMSTDDLVKLFPSRIRRRFSRGLTRKPMALIKKLRKAKIEAPAGEKPAAVRTHLRNMIIVPEMIGSVIGVYNGKTFNQVEIKPEMIGHYLAEFSISYKPVKHGRPGVGATNSSRFIPLK.

It belongs to the universal ribosomal protein uS19 family.

It localises to the cytoplasm. This Arabidopsis thaliana (Mouse-ear cress) protein is Small ribosomal subunit protein uS19y (RPS15C).